A 466-amino-acid polypeptide reads, in one-letter code: Glutamate--tRNA ligase (466 aa).

The 'HIGH' region signature appears at 10 to 20 (PSPTGYLHVGG). Residues C99, C101, C126, and H128 each coordinate Zn(2+). The short motif at 237-241 (RLSKR) is the 'KMSKS' region element. Residue K240 participates in ATP binding.

This sequence belongs to the class-I aminoacyl-tRNA synthetase family. Glutamate--tRNA ligase type 1 subfamily. As to quaternary structure, monomer. It depends on Zn(2+) as a cofactor.

The protein localises to the cytoplasm. It carries out the reaction tRNA(Glu) + L-glutamate + ATP = L-glutamyl-tRNA(Glu) + AMP + diphosphate. In terms of biological role, catalyzes the attachment of glutamate to tRNA(Glu) in a two-step reaction: glutamate is first activated by ATP to form Glu-AMP and then transferred to the acceptor end of tRNA(Glu). The protein is Glutamate--tRNA ligase of Trichlorobacter lovleyi (strain ATCC BAA-1151 / DSM 17278 / SZ) (Geobacter lovleyi).